The chain runs to 601 residues: N-acetyltransferase ESCO2 (601 aa).

Phosphoserine occurs at positions 29, 75, 223, and 244. The interval 222–243 is disordered; sequence SSLENEPSLGRTQKSKSEVIED. Residues 282–305 are compositionally biased toward basic and acidic residues; the sequence is KEKLIKDSSDDRVSSKEHKVDKNE. Positions 282–315 are disordered; that stretch reads KEKLIKDSSDDRVSSKEHKVDKNEAFSSEDSLGE. Residues 306-315 are compositionally biased toward polar residues; that stretch reads AFSSEDSLGE. Serine 312 carries the post-translational modification Phosphoserine. The CCHH-type zinc-finger motif lies at 387-411; it reads TVCKSCGMIYTASNPEDEMQHVQHH. Residue serine 512 is modified to Phosphoserine.

Belongs to the acetyltransferase family. ECO subfamily. Widely expressed in fetal tissues. In adult, it is expressed in thymus, placenta and small intestine.

The protein localises to the nucleus. It is found in the chromosome. The enzyme catalyses L-lysyl-[protein] + acetyl-CoA = N(6)-acetyl-L-lysyl-[protein] + CoA + H(+). Acetyltransferase required for the establishment of sister chromatid cohesion. Couples the processes of cohesion and DNA replication to ensure that only sister chromatids become paired together. In contrast to the structural cohesins, the deposition and establishment factors are required only during the S phase. Acetylates the cohesin component SMC3. In Homo sapiens (Human), this protein is N-acetyltransferase ESCO2.